The chain runs to 235 residues: MASLDRVKVLVLGDSGVGKSSLVHLLCQNQVLGNPSWTVGCSVDVRLHEYREGTPEEKTYYIELWDVGGSVGSASSVKSTRAVFYNAVNGIILVHDLTNKKSSQNLYRWSLEALNRDLQPTGVLVTNGDYDREQFADNQIPLLVIGTKLDQIPEAKRSEVLTRTAFLAEDFNAEEINLDCTNTRCLAAGSSNAVKLSRFFDKVIEKRYSREGNLIPGFSDRKRFAGGNFKSLHYD.

The tract at residues 1-235 (MASLDRVKVL…GGNFKSLHYD (235 aa)) is small GTPase-like. GTP contacts are provided by residues 16-21 (GVGKSS), 148-150 (KLD), and 179-180 (DC).

Belongs to the small GTPase superfamily. Rab family. In terms of assembly, homodimer.

In terms of biological role, required for KRAS signaling regulation and modulation of cell proliferation. Regulator of KRAS prenylation, and probably prenylation of other small GTPases. Required for lymphocyte development and function. Not required for myeloid cell development. This Xenopus tropicalis (Western clawed frog) protein is Rab-like protein 3 (rabl3).